The following is a 752-amino-acid chain: Photosystem I P700 chlorophyll a apoprotein A1 (752 aa).

8 helical membrane passes run 73-96 (IFAAHFGHLAVVTLWLSGMIFHGA), 159-182 (LYVTAIGGLVLAGLFLFAGWFHYH), 198-222 (LNHHLAVLLGCGSLGWAGHLIHVSA), 294-312 (ISHHHLAIAVLFIIAGHMY), 349-372 (WHAQLATNLAFLGSLTIIVAHHMY), 388-414 (LCIFTHHMWIGGFLIVGGAAHATIFMV), 436-458 (AIISHLNWVCIFLGFHSFGLYVH), and 533-551 (FLVHHIHAFTIHVTVLILL). Residues Cys575 and Cys584 each coordinate [4Fe-4S] cluster. A run of 2 helical transmembrane segments spans residues 591-612 (HVFLGLFWMYNSISIVIFHFSW) and 666-688 (LSAYGLMFLGAHFIWAFSLMFLF). Residue His677 coordinates chlorophyll a'. Chlorophyll a-binding residues include Met685 and Tyr693. Trp694 serves as a coordination point for phylloquinone. The chain crosses the membrane as a helical span at residues 726 to 746 (AVGVAHYLLGGIATTWAFFHA).

It belongs to the PsaA/PsaB family. As to quaternary structure, the PsaA/B heterodimer binds the P700 chlorophyll special pair and subsequent electron acceptors. PSI consists of a core antenna complex that captures photons, and an electron transfer chain that converts photonic excitation into a charge separation. The cyanobacterial PSI reaction center is composed of one copy each of PsaA,B,C,D,E,F,I,J,K,L,M and X, and forms trimeric complexes. The cofactor is PSI electron transfer chain: 5 chlorophyll a, 1 chlorophyll a', 2 phylloquinones and 3 4Fe-4S clusters. PSI core antenna: 90 chlorophyll a, 22 carotenoids, 3 phospholipids and 1 galactolipid. P700 is a chlorophyll a/chlorophyll a' dimer, A0 is one or more chlorophyll a, A1 is one or both phylloquinones and FX is a shared 4Fe-4S iron-sulfur center..

Its subcellular location is the cellular thylakoid membrane. The catalysed reaction is reduced [plastocyanin] + hnu + oxidized [2Fe-2S]-[ferredoxin] = oxidized [plastocyanin] + reduced [2Fe-2S]-[ferredoxin]. In terms of biological role, psaA and PsaB bind P700, the primary electron donor of photosystem I (PSI), as well as the electron acceptors A0, A1 and FX. PSI is a plastocyanin/cytochrome c6-ferredoxin oxidoreductase, converting photonic excitation into a charge separation, which transfers an electron from the donor P700 chlorophyll pair to the spectroscopically characterized acceptors A0, A1, FX, FA and FB in turn. Oxidized P700 is reduced on the lumenal side of the thylakoid membrane by plastocyanin or cytochrome c6. This is Photosystem I P700 chlorophyll a apoprotein A1 from Mastigocladus laminosus (Fischerella sp.).